The chain runs to 304 residues: Killer cell immunoglobulin-like receptor 2DS5 (304 aa).

The N-terminal stretch at M1–P21 is a signal peptide. At H22–H245 the chain is on the extracellular side. Ig-like C2-type domains follow at residues E42–S107 and G142–S205. Cystine bridges form between C49-C100 and C149-C198. N-linked (GlcNAc...) asparagine glycans are attached at residues N67, N84, N178, and N223. The helical transmembrane segment at V246–L264 threads the bilayer. Over L265 to A304 the chain is Cytoplasmic. A disordered region spans residues A275–A304. A compositionally biased stretch (basic and acidic residues) spans V288–A304.

It belongs to the immunoglobulin superfamily. As to quaternary structure, interacts with TYROBP. N-glycosylated, glycosylation varies depending on the allele which alters cell surface expression levels. Expressed on a discrete subset of peripheral blood NK cells.

It is found in the cell membrane. Its function is as follows. Activating natural killer (NK) receptor that recognizes C2 epitopes of HLA-C alleles. Bridging the innate and adaptive immune systems, NK cells express a number of cell surface receptors which either inhibit or stimulate their cytotoxicity. Able to activate NK cells citotoxicity and cytokine production such as IFNG. Receptor functions are attenuated even lost in some alleles, such as KIR2DS5*002 represented in this entry. The chain is Killer cell immunoglobulin-like receptor 2DS5 from Homo sapiens (Human).